The chain runs to 392 residues: MDTITSFLKKESSAGILLIIVTVLALILQNSFLSAAYTSFLHTPVEIRFGALHIAKPLLLWVNDGLMAIFFFLIGLEVKREVMEGHLSSLKQITLPGIAAVGGMIVPALIFILFNKGESFAMNGWAIPTATDIAFALGILSLLGPRVPLSLKIFLMALSIIDDLGAIVIIALFYTTDLSTLSITVAAISLAILFIMNRMDVAIKSAYIVIGIILWVSVLKSGVHATLAGVALAFMIPMESKNKKGNRFSMAKEMEHDLHYWVAFLILPLFAFVNAGVDLKGISLEAMSGPVPLGVMLGLFVGKQAGVFGFSWLAIKMGMASLPKESSWMMLYGVSVLTGIGFTMSLFVDSLAYDDTQIYHYADKLAILLGSFLSAATGYLILRMQKNKNVES.

11 helical membrane passes run 16 to 36 (ILLIIVTVLALILQNSFLSAA), 58 to 78 (LLLWVNDGLMAIFFFLIGLEV), 93 to 113 (ITLPGIAAVGGMIVPALIFIL), 124 to 144 (GWAIPTATDIAFALGILSLLG), 153 to 173 (IFLMALSIIDDLGAIVIIALF), 176 to 196 (TDLSTLSITVAAISLAILFIM), 199 to 219 (MDVAIKSAYIVIGIILWVSVL), 257 to 277 (DLHYWVAFLILPLFAFVNAGV), 295 to 315 (VMLGLFVGKQAGVFGFSWLAI), 328 to 348 (WMMLYGVSVLTGIGFTMSLFV), and 362 to 382 (ADKLAILLGSFLSAATGYLIL).

Belongs to the NhaA Na(+)/H(+) (TC 2.A.33) antiporter family.

It is found in the cell inner membrane. It catalyses the reaction Na(+)(in) + 2 H(+)(out) = Na(+)(out) + 2 H(+)(in). Functionally, na(+)/H(+) antiporter that extrudes sodium in exchange for external protons. This is Na(+)/H(+) antiporter NhaA from Sulfurovum sp. (strain NBC37-1).